Consider the following 251-residue polypeptide: Triosephosphate isomerase (251 aa).

9–11 (NWK) serves as a coordination point for substrate. Catalysis depends on histidine 95, which acts as the Electrophile. Catalysis depends on glutamate 167, which acts as the Proton acceptor. Residues glycine 173, serine 212, and 233 to 234 (GG) each bind substrate.

It belongs to the triosephosphate isomerase family. Homodimer.

The protein resides in the cytoplasm. It carries out the reaction D-glyceraldehyde 3-phosphate = dihydroxyacetone phosphate. It functions in the pathway carbohydrate biosynthesis; gluconeogenesis. It participates in carbohydrate degradation; glycolysis; D-glyceraldehyde 3-phosphate from glycerone phosphate: step 1/1. In terms of biological role, involved in the gluconeogenesis. Catalyzes stereospecifically the conversion of dihydroxyacetone phosphate (DHAP) to D-glyceraldehyde-3-phosphate (G3P). The polypeptide is Triosephosphate isomerase (Pseudomonas putida (strain ATCC 700007 / DSM 6899 / JCM 31910 / BCRC 17059 / LMG 24140 / F1)).